A 146-amino-acid polypeptide reads, in one-letter code: Large ribosomal subunit protein uL16 (146 aa).

Belongs to the universal ribosomal protein uL16 family. Part of the 50S ribosomal subunit.

Binds 23S rRNA and is also seen to make contacts with the A and possibly P site tRNAs. The protein is Large ribosomal subunit protein uL16 of Thermomicrobium roseum (strain ATCC 27502 / DSM 5159 / P-2).